A 164-amino-acid chain; its full sequence is SsrA-binding protein (164 aa).

The interval 141–164 (KLHDKRQDEKQKSIKKEINSALKR) is disordered. Residues 145-158 (KRQDEKQKSIKKEI) show a composition bias toward basic and acidic residues.

Belongs to the SmpB family.

The protein resides in the cytoplasm. Required for rescue of stalled ribosomes mediated by trans-translation. Binds to transfer-messenger RNA (tmRNA), required for stable association of tmRNA with ribosomes. tmRNA and SmpB together mimic tRNA shape, replacing the anticodon stem-loop with SmpB. tmRNA is encoded by the ssrA gene; the 2 termini fold to resemble tRNA(Ala) and it encodes a 'tag peptide', a short internal open reading frame. During trans-translation Ala-aminoacylated tmRNA acts like a tRNA, entering the A-site of stalled ribosomes, displacing the stalled mRNA. The ribosome then switches to translate the ORF on the tmRNA; the nascent peptide is terminated with the 'tag peptide' encoded by the tmRNA and targeted for degradation. The ribosome is freed to recommence translation, which seems to be the essential function of trans-translation. This is SsrA-binding protein from Prochlorococcus marinus (strain AS9601).